The sequence spans 300 residues: Transcription termination/antitermination protein NusG (300 aa).

The disordered stretch occupies residues Met-1 to Ile-99. Composition is skewed to acidic residues over residues Glu-14–Asp-41 and Glu-47–Asp-97.

This sequence belongs to the NusG family.

Its function is as follows. Participates in transcription elongation, termination and antitermination. In Streptomyces coelicolor (strain ATCC BAA-471 / A3(2) / M145), this protein is Transcription termination/antitermination protein NusG.